The sequence spans 639 residues: DNA gyrase subunit B (639 aa).

Positions 392 to 402 are enriched in basic and acidic residues; the sequence is QAEELTRRKSA. Residues 392-416 form a disordered region; it reads QAEELTRRKSALESTSLPGKLADCQ. The Toprim domain maps to 423–537; that stretch reads SELFIVEGDS…AGYVYAAQPP (115 aa). Positions 429, 502, and 504 each coordinate Mg(2+). Lys-624 participates in a covalent cross-link: Glycyl lysine isopeptide (Lys-Gly) (interchain with G-Cter in SAMP2).

It belongs to the type II topoisomerase GyrB family. In terms of assembly, heterotetramer, composed of two GyrA and two GyrB chains. In the heterotetramer, GyrA contains the active site tyrosine that forms a transient covalent intermediate with DNA, while GyrB binds cofactors and catalyzes ATP hydrolysis. It depends on Mg(2+) as a cofactor. The cofactor is Mn(2+). Ca(2+) serves as cofactor.

Its subcellular location is the cytoplasm. The catalysed reaction is ATP-dependent breakage, passage and rejoining of double-stranded DNA.. In terms of biological role, a type II topoisomerase that negatively supercoils closed circular double-stranded (ds) DNA in an ATP-dependent manner to modulate DNA topology and maintain chromosomes in an underwound state. Negative supercoiling favors strand separation, and DNA replication, transcription, recombination and repair, all of which involve strand separation. Also able to catalyze the interconversion of other topological isomers of dsDNA rings, including catenanes and knotted rings. Type II topoisomerases break and join 2 DNA strands simultaneously in an ATP-dependent manner. This Haloferax volcanii (strain ATCC 29605 / DSM 3757 / JCM 8879 / NBRC 14742 / NCIMB 2012 / VKM B-1768 / DS2) (Halobacterium volcanii) protein is DNA gyrase subunit B.